A 220-amino-acid polypeptide reads, in one-letter code: Chaperone protein TorD (220 aa).

This sequence belongs to the TorD/DmsD family. TorD subfamily.

Its subcellular location is the cytoplasm. Its function is as follows. Involved in the biogenesis of TorA. Acts on TorA before the insertion of the molybdenum cofactor and, as a result, probably favors a conformation of the apoenzyme that is competent for acquiring the cofactor. This chain is Chaperone protein TorD, found in Vibrio cholerae serotype O1 (strain ATCC 39315 / El Tor Inaba N16961).